Reading from the N-terminus, the 949-residue chain is AP-1 complex subunit beta-1 (949 aa).

Position 318 is an N6-acetyllysine (Lys-318). Tyr-574 bears the 3'-nitrotyrosine mark. Residues 592-623 (SLPPRTASSESTESPEAAPAGAPASDQPDVIP) form a disordered region. Residues 594–616 (PPRTASSESTESPEAAPAGAPAS) are compositionally biased toward low complexity.

This sequence belongs to the adaptor complexes large subunit family. In terms of assembly, adaptor protein complex 1 (AP-1) is a heterotetramer composed of two large adaptins (gamma-type subunit AP1G1 and beta-type subunit AP1B1), a medium adaptin (mu-type subunit AP1M1 or AP1M2) and a small adaptin (sigma-type subunit AP1S1 or AP1S2 or AP1S3). Post-translationally, the N-terminus is blocked.

The protein localises to the golgi apparatus. It is found in the cytoplasmic vesicle. It localises to the clathrin-coated vesicle membrane. Subunit of clathrin-associated adaptor protein complex 1 that plays a role in protein sorting in the late-Golgi/trans-Golgi network (TGN) and/or endosomes. The AP complexes mediate both the recruitment of clathrin to membranes and the recognition of sorting signals within the cytosolic tails of transmembrane cargo molecules. The chain is AP-1 complex subunit beta-1 (Ap1b1) from Rattus norvegicus (Rat).